Reading from the N-terminus, the 373-residue chain is C-C chemokine receptor type 2 (373 aa).

Residues 1-55 are Extracellular-facing; sequence MEDNNMLPQFIHGILSTSHSLFTRSIQELDEGATTPYDYDDGEPCHKTSVKQIGA. Residues 56–83 form a helical membrane-spanning segment; the sequence is WILPPLYSLVFIFGFVGNMLVIIILIGC. The Cytoplasmic segment spans residues 84–93; that stretch reads KKLKSMTDIY. The chain crosses the membrane as a helical span at residues 94 to 114; the sequence is LLNLAISDLLFLLTLPFWAHY. Topologically, residues 115-127 are extracellular; sequence AANEWVFGNIMCK. Cys126 and Cys203 are joined by a disulfide. A helical membrane pass occupies residues 128-149; the sequence is VFTGLYHIGYFGGIFFIILLTI. The Cytoplasmic portion of the chain corresponds to 150 to 166; sequence DRYLAIVHAVFALKART. Residue Tyr152 is modified to Phosphotyrosine; by JAK2. A helical membrane pass occupies residues 167–191; the sequence is VTFGVITSVVTWVVAVFASLPGIIF. The Extracellular segment spans residues 192 to 219; that stretch reads TKSKQDDHHYTCGPYFTQLWKNFQTIMR. A helical transmembrane segment spans residues 220 to 239; sequence NILSLILPLLVMVICYSGIL. Residues 240–256 lie on the Cytoplasmic side of the membrane; the sequence is HTLFRCRNEKKRHRAVR. The chain crosses the membrane as a helical span at residues 257 to 281; it reads LIFAIMIVYFLFWTPYNIVLFLTTF. At 282 to 298 the chain is on the extracellular side; it reads QESLGMSNCVIDKHLDQ. Residues 299 to 322 form a helical membrane-spanning segment; that stretch reads AMQVTETLGMTHCCINPVIYAFVG. Residues 323-373 are Cytoplasmic-facing; that stretch reads EKFRRYLSIFFRKHIAKRLCKQCPVFYRETADRVSSTFTPSTGEQEVSVGL.

Belongs to the G-protein coupled receptor 1 family. In terms of assembly, interacts with ARRB1. Interacts (via extracellular N-terminal region) with beta-defensin DEFB106A/DEFB106B; this interaction may preferentially require specific tyrosine sulfation on CCR2. Interacts with NUP85; the interaction is required for CCR2 clusters formation on the cell membrane and CCR2 signaling. N-glycosylated. Post-translationally, sulfation increases the affinity for both monomeric and dimeric CCL2 with stronger binding to the monomeric form. Binding of sulfated CCR2 to CCL2 promotes conversion of CCL2 from dimer to monomer. Epressed in mature thymocytes. Detected in monocyte/macrophage cell lines, but not in nonhematopoietic cell lines.

It localises to the cell membrane. In terms of biological role, key functional receptor for CCL2 but can also bind CCL7 and CCL12 chemokines. Its binding with CCL2 on monocytes and macrophages mediates chemotaxis and migration induction through the activation of the PI3K cascade, the small G protein Rac and lamellipodium protrusion. Also acts as a receptor for the beta-defensin DEFB106A/DEFB106B. Regulates the expression of T-cell inflammatory cytokines and T-cell differentiation, promoting the differentiation of T-cells into T-helper 17 cells (Th17) during inflammation. Facilitates the export of mature thymocytes by enhancing directional movement of thymocytes to sphingosine-1-phosphate stimulation and up-regulation of S1P1R expression; signals through the JAK-STAT pathway to regulate FOXO1 activity leading to an increased expression of S1P1R. Plays an important role in mediating peripheral nerve injury-induced neuropathic pain. Increases NMDA-mediated synaptic transmission in both dopamine D1 and D2 receptor-containing neurons, which may be caused by MAPK/ERK-dependent phosphorylation of GRIN2B/NMDAR2B. Mediates the recruitment of macrophages and monocytes to the injury site following brain injury. In Mus musculus (Mouse), this protein is C-C chemokine receptor type 2 (Ccr2).